A 1148-amino-acid chain; its full sequence is Putative ATP-dependent RNA helicase rha-2 (1148 aa).

Over residues 1-10 (MGKRKTKEDN) the composition is skewed to basic and acidic residues. 2 disordered regions span residues 1 to 51 (MGKR…FAKE) and 101 to 163 (STKL…DAGN). The segment covering 138-160 (PTDDESSSEEEEEEEEGDNDIED) has biased composition (acidic residues). Residues 246-412 (VEAINENLVT…KLFPLLTPKV (167 aa)) enclose the Helicase ATP-binding domain. 259 to 266 (GETGSGKT) serves as a coordination point for ATP. The DEAH box signature appears at 355-358 (DEAH). In terms of domain architecture, Helicase C-terminal spans 463–703 (EVKQLITKLK…QLVLHLKSMN (241 aa)).

Belongs to the DEAD box helicase family. DEAH subfamily.

The catalysed reaction is ATP + H2O = ADP + phosphate + H(+). Its function is as follows. Probable ATP-binding RNA helicase. This Caenorhabditis elegans protein is Putative ATP-dependent RNA helicase rha-2 (rha-2).